A 1380-amino-acid polypeptide reads, in one-letter code: Inverted formin-2 (1380 aa).

A GBD/FH3 domain is found at 1–330 (MSLKEGAHTK…RAVLLADDCQ (330 aa)). Disordered stretches follow at residues 341–391 (LVTS…SGIP) and 440–541 (ISTS…PPPL). A compositionally biased stretch (basic residues) spans 343–352 (TSKKHPSKEK). A compositionally biased stretch (basic and acidic residues) spans 367-385 (QTDKPKDESCEEKTVKKDP). An FH1 domain is found at 432 to 592 (VVSNAIDRIS…DYSLGYLPKA (161 aa)). 2 stretches are compositionally biased toward pro residues: residues 446 to 470 (LPPP…PPLP) and 478 to 541 (TPPP…PPPL). Residues 593 to 981 (YFKVNKPTLK…AEKRKKQLAD (389 aa)) form the FH2 domain. Coiled coils occupy residues 879-930 (LKKL…KLAD) and 956-991 (LKAK…KGEN). Residues 1009–1024 (DALLADIKKGFQLRKT) form the WH2 domain. Disordered stretches follow at residues 1026–1049 (KTKT…DGTD), 1188–1244 (HKER…LSEA), and 1260–1380 (FQSS…CVVQ). Polar residues-rich tracts occupy residues 1206-1244 (GTES…LSEA), 1260-1284 (FQSS…QAQR), and 1294-1303 (TRDTTVTEGS). A compositionally biased stretch (basic and acidic residues) spans 1306–1322 (EEDKCNDEGYPEHKTMG). Positions 1328-1339 (SSSHSTTLQQSS) are enriched in low complexity. Residues 1345–1359 (VKRGSSKHKKKRRSS) are compositionally biased toward basic residues.

Belongs to the formin homology family.

This is Inverted formin-2 (inf2) from Xenopus tropicalis (Western clawed frog).